Reading from the N-terminus, the 431-residue chain is Protein PIN-LIKES 6 (431 aa).

Residues 1-29 lie on the Lumenal side of the membrane; that stretch reads MIARILAALADSMEMPVAAGGGSVLGTIK. Residues 30-50 form a helical membrane-spanning segment; it reads IAVMPIAKVFTMCFLGLLMAS. Residues 51–66 are Cytoplasmic-facing; that stretch reads KYVNILPPSGRKLLNG. The helical transmembrane segment at 67–87 threads the bilayer; that stretch reads LVFSLLLPCLIFSQLGQAVTL. Residues 88–93 lie on the Lumenal side of the membrane; that stretch reads QKMLQW. The chain crosses the membrane as a helical span at residues 94-114; it reads WFIPVNVVLGTISGSIIGFIV. Residues 115 to 128 lie on the Cytoplasmic side of the membrane; it reads ASIVRPPYPYFKFT. Residues 129–149 form a helical membrane-spanning segment; sequence IIQIGVGNIGNVPLVLLAALC. Over 150-169 the chain is Lumenal; sequence RDTSNPFGDSEKCSIDGTAY. Residues 170–190 traverse the membrane as a helical segment; the sequence is ISFGQWVGAIILYTYVYQMFA. Residues 191 to 268 lie on the Cytoplasmic side of the membrane; it reads PPPEGFDAEE…FLYEKLKLKQ (78 aa). A helical membrane pass occupies residues 269–289; sequence IVQPAIVASILAMILGAIPFT. The Lumenal portion of the chain corresponds to 290–306; sequence KKLIFTNGAPLFFFTDS. A helical transmembrane segment spans residues 307–327; sequence CMILGDAMIPCILLALGGNLI. The Cytoplasmic portion of the chain corresponds to 328 to 340; that stretch reads NGPGSSKLGFKTT. A helical transmembrane segment spans residues 341–361; it reads AAIIIGRLVLVPPVGLGIVTV. The Lumenal segment spans residues 362–376; the sequence is ADKLGFLPADDKMFR. A helical membrane pass occupies residues 377–397; it reads FVLLLQHTMPTSVLSGAVANL. The Cytoplasmic portion of the chain corresponds to 398-406; the sequence is RGCGRESAA. A helical membrane pass occupies residues 407-427; it reads VLFWVHIFAIFSMAGWMVLYI. Residues 428–431 lie on the Lumenal side of the membrane; sequence NILF.

Belongs to the auxin efflux carrier (TC 2.A.69.2) family. Expressed in seedlings, rosette and cauline leaves, stems and flowers.

It is found in the endoplasmic reticulum membrane. Involved in cellular auxin homeostasis by regulating auxin metabolism. Regulates intracellular auxin accumulation at the endoplasmic reticulum and thus auxin availability for nuclear auxin signaling. The chain is Protein PIN-LIKES 6 from Arabidopsis thaliana (Mouse-ear cress).